A 279-amino-acid chain; its full sequence is Prepilin leader peptidase/N-methyltransferase (279 aa).

The Periplasmic portion of the chain corresponds to 1–16; that stretch reads MDDLREFAQLFPAWWF. Residues 17 to 35 form a helical membrane-spanning segment; sequence GALGVLGLIVGSFLNVVIY. At 36 to 104 the chain is on the cytoplasmic side; sequence RLPIMLERRW…RSRCCHQSVS (69 aa). A helical transmembrane segment spans residues 105 to 123; the sequence is VQYPLVEVITMLAFLAAGL. The Periplasmic segment spans residues 124 to 130; it reads LWLPGMA. The chain crosses the membrane as a helical span at residues 131–149; the sequence is LWGALILLSFLLVLTVIDI. At 150-163 the chain is on the cytoplasmic side; that stretch reads KTLLLPDELTLSLL. The helical transmembrane segment at 164 to 182 threads the bilayer; that stretch reads WMGLLFNLSGTFVSLNDAV. Residues 183-185 lie on the Periplasmic side of the membrane; sequence VGA. The chain crosses the membrane as a helical span at residues 186–204; it reads MAGYLSLWLLYWAFKYATG. Residues 205 to 214 lie on the Cytoplasmic side of the membrane; it reads KEALGYGDFK. A helical membrane pass occupies residues 215–233; sequence LLAALGAWLGWQALPNLVL. Residues 234–236 lie on the Periplasmic side of the membrane; the sequence is VAA. A helical membrane pass occupies residues 237–254; that stretch reads LSGLVVTLIWRGLRKEDT. Over 255-257 the chain is Cytoplasmic; it reads AKP. The chain crosses the membrane as a helical span at residues 258-276; the sequence is LAFGPWLAIGGVFGMIMNG. Over 277-279 the chain is Periplasmic; the sequence is FNL.

This sequence belongs to the peptidase A24 family.

It localises to the cell inner membrane. The enzyme catalyses Typically cleaves a -Gly-|-Phe- bond to release an N-terminal, basic peptide of 5-8 residues from type IV prepilin, and then N-methylates the new N-terminal amino group, the methyl donor being S-adenosyl-L-methionine.. Its function is as follows. Plays a role in type II pseudopili formation by proteolytically removing the leader sequence from substrate proteins and subsequently monomethylating the alpha-amino group of the newly exposed N-terminal phenylalanine. Substrates include proteins required for biogenesis of the type II general secretory apparatus. The protein is Prepilin leader peptidase/N-methyltransferase (outO) of Pectobacterium carotovorum subsp. carotovorum (Erwinia carotovora subsp. carotovora).